Reading from the N-terminus, the 548-residue chain is C2H2-type transcription factor MSN2 (548 aa).

2 C2H2-type zinc fingers span residues 420–448 and 449–471; these read FKCELCDRRFRRQEHLKRHYRSLHTQDKP and FECNECGKKFSRSDNLTQHARTH.

Interacts with HOG1/OSM1.

The protein localises to the nucleus. Its subcellular location is the cytoplasm. Functionally, transcription factor that acts as a key downstream transcription factor in the HOG1-MAPK pathway. Regulates the expression of a series of downstream genes and controls vegetative growth, conidiogenesis, cell wall integrity, stress response, mitochondrial morphology, and pathogenicity. Binds to a putative promoter region 1500 bp upstream of the start codons of the target genes MGG_07019, POX1 and DCI1. Binds to the AGGGG and CCCCT motif of the COS1 promoter region. Involved in fatty acid beta-oxidation by directly regulating the expression of the dienoyl-CoA isomerase DCI1, thereby facilitating invasive hyphal growth during the early infection stage. Targets also the 3-methylglutaconyl-CoA hydratase-encoding gene (AUH1) to control mitochondrial morphology and mitophagy, which are critical for the infectious growth of the pathogen. The polypeptide is C2H2-type transcription factor MSN2 (Pyricularia oryzae (strain 70-15 / ATCC MYA-4617 / FGSC 8958) (Rice blast fungus)).